The primary structure comprises 157 residues: Cuticle protein 19 (157 aa).

6 repeat units span residues 11–14 (AAPA), 18–21 (AAPA), 24–27 (AAPA), 29–32 (AAPA), 39–42 (AAPA), and 47–50 (AAPA). Residues 56 to 127 (YPKYAFEYGV…SGPSAHPAPA (72 aa)) enclose the Chitin-binding type R&amp;R domain. Repeat unit 7 spans residues 141–144 (AAPA).

Its function is as follows. Component of the cuticle of migratory locust which contains more than 100 different structural proteins. This Locusta migratoria (Migratory locust) protein is Cuticle protein 19.